The sequence spans 218 residues: Ribose-5-phosphate isomerase A (218 aa).

Substrate is bound by residues 28-31 (SGST), 81-84 (DGAD), and 94-97 (KGGG). The active-site Proton acceptor is the Glu-103. Substrate is bound at residue Lys-121.

The protein belongs to the ribose 5-phosphate isomerase family. Homodimer.

It catalyses the reaction aldehydo-D-ribose 5-phosphate = D-ribulose 5-phosphate. It participates in carbohydrate degradation; pentose phosphate pathway; D-ribose 5-phosphate from D-ribulose 5-phosphate (non-oxidative stage): step 1/1. Catalyzes the reversible conversion of ribose-5-phosphate to ribulose 5-phosphate. In Dichelobacter nodosus (strain VCS1703A), this protein is Ribose-5-phosphate isomerase A.